A 530-amino-acid chain; its full sequence is RNA-binding protein 39 (530 aa).

The disordered stretch occupies residues 1-146; the sequence is MADDIDIEAM…PVREPIDNLT (146 aa). Residue alanine 2 is modified to N-acetylalanine. Residues 14 to 32 are compositionally biased toward basic and acidic residues; that stretch reads PYKKDENKLNSANGHEERS. Basic residues-rich tracts occupy residues 33 to 56 and 64 to 95; these read KKRK…KERK and KKSK…RGRY. The residue at position 95 (tyrosine 95) is a Phosphotyrosine. Phosphoserine is present on residues serine 97 and serine 100. Lysine 111 participates in a covalent cross-link: Glycyl lysine isopeptide (Lys-Gly) (interchain with G-Cter in SUMO2). Position 117 is a phosphoserine (serine 117). Residue lysine 119 forms a Glycyl lysine isopeptide (Lys-Gly) (interchain with G-Cter in SUMO2) linkage. Basic residues predominate over residues 119–130; it reads KLSRRRSRSKSP. A phosphoserine mark is found at serine 121 and serine 136. The segment covering 131-146 has biased composition (basic and acidic residues); the sequence is FRKDKSPVREPIDNLT. Position 146 is a phosphothreonine (threonine 146). Residues 153–230 form the RRM 1 domain; that stretch reads RTVFCMQLAA…VPIIVQASQA (78 aa). Lysine 244 is covalently cross-linked (Glycyl lysine isopeptide (Lys-Gly) (interchain with G-Cter in SUMO2)). One can recognise an RRM 2 domain in the interval 250-328; it reads MRLYVGSLHF…RPMKVGHVTE (79 aa). Residues 291–355 are activating domain; that stretch reads KGYGFITFSD…RTGIDLGTTG (65 aa). An interaction with JUN region spans residues 291–406; the sequence is KGYGFITFSD…IDLQTRLSQQ (116 aa). A phosphoserine mark is found at serine 334, serine 337, and serine 341. The segment at 355–406 is interaction with ESR1 and ESR2; that stretch reads GRLQLMARLAEGTGLQIPPAAQQALQMSGSLAFGAVAEFSFVIDLQTRLSQQ. Residues 406–530 form an interaction with NCOA6 region; sequence QTEASALAAA…ATQLLVPSRR (125 aa). Positions 445–508 constitute an RRM 3 domain; it reads EIKDDVIEEC…KMITAAYVPL (64 aa).

The protein belongs to the splicing factor SR family. In terms of assembly, interacts with NCOA6 and JUN. Interacts with ESR1 and ESR2, in the presence of estradiol (E2). Interacts with RSRC1 (via Arg/Ser-rich domain). Interacts with SF3B1. Interacts with ZNF106 (via N-terminus).

It localises to the nucleus. Functionally, RNA-binding protein that acts as a pre-mRNA splicing factor. Acts by promoting exon inclusion via regulation of exon cassette splicing. Also acts as a transcriptional coactivator for steroid nuclear receptors ESR1/ER-alpha and ESR2/ER-beta, and JUN/AP-1, independently of the pre-mRNA splicing factor activity. This Mus musculus (Mouse) protein is RNA-binding protein 39 (Rbm39).